Here is a 323-residue protein sequence, read N- to C-terminus: tRNA U34 carboxymethyltransferase (323 aa).

Residues Lys-91, Trp-105, Lys-110, Gly-130, Asp-152–Thr-154, Ile-181–Glu-182, Met-196, Tyr-200, and Arg-315 each bind carboxy-S-adenosyl-L-methionine.

It belongs to the class I-like SAM-binding methyltransferase superfamily. CmoB family. Homotetramer.

The enzyme catalyses carboxy-S-adenosyl-L-methionine + 5-hydroxyuridine(34) in tRNA = 5-carboxymethoxyuridine(34) in tRNA + S-adenosyl-L-homocysteine + H(+). In terms of biological role, catalyzes carboxymethyl transfer from carboxy-S-adenosyl-L-methionine (Cx-SAM) to 5-hydroxyuridine (ho5U) to form 5-carboxymethoxyuridine (cmo5U) at position 34 in tRNAs. This Escherichia fergusonii (strain ATCC 35469 / DSM 13698 / CCUG 18766 / IAM 14443 / JCM 21226 / LMG 7866 / NBRC 102419 / NCTC 12128 / CDC 0568-73) protein is tRNA U34 carboxymethyltransferase.